Consider the following 1393-residue polypeptide: MQCYTELLPPTGVTHSLALPFISESANNLVVARTSRLQIFSLLDVGPRPGGIEEQGVPKLVLEREYALPGTVTDLCRVKLLNTKSGGEAILLAFRNAKLALIEWDPGRYGICTISIHYYERDDSTSSPWVPDLSSCGSILSVDPSSRCAVFNFGIRNLAILPFHQPGDDLVMDDYGELDDERLGSHGLESGTDCDMTKESIAHRAPYSSSFVLPLAALDPSILHPISLAFLYEYREPTFGILYSQVATSNALLHERKDVVFYTVFTLDLEQRASTTLLSVSRLPSDLFKVVALPPPVGGALLIGSNELVHVDQAGKTNAVGVNEFSRQVSSFSMTDQSDLALRLEGCIVERLSETNGDLLLVPTTGEIVLVKFRLDGRSVSGISVHPIPPHAGGDIVKSAASSSAFLGDKRVFLGSEDADSILLGWSVPSSGTKKPRPQARHTEEDSGGFSDEDQSEDDVYEDDLYATVPEVVVDGRRPSAESFGSSLYNFREYDRLLNIGPLKDIAFGRSFTSLGGEENAGNDSGLELVASQGWDRSGGLAVMKRGLELQVLNSMRTDLASCVWTASVAHMEEAVSKTTTQAENRECHQYVVVSKATSAEREQSEVFRVEGQELRPFRAPEFNPNEDVTIDIGTLIGKNRVVQILRSEVRSYDGDLGLAQIYPVWDEDTSEERMAISSSLVDPYVAILRDDSTLLLLQADDSGDLDEVELNEQIANSKWTSCCLYFDKTGIFSSISATSDELAQNSMTLFLMTQDCRLFIYRLPDQKLLAIIEGVDCLPPVLSSEPPKRSTTREVLTEIVVADLGDSWSSFPYLIIRSRHDDLAVYRPFISITKSVGEPHADLNFLKETNLVLPRITSGVEDQSSTEEVIKSVPLRIVSNISGFSAIFRPGVSPGFIVRTSTSSPHFLGLKGGYAQSLSKFQTSECGEGFILLDSKVLCFILLCLTYCILSFHTGCHSYYPWTIQQIPIGEQVDHLAYSSSSGMYVIGTSHRTEFKLPEDDELHPEWRNEMTSFFPEVQRSSLKVVSPKTWTVIDSPAEHVMAVKNMSLEISENTHERKDMIVVGTAFARGEDIASRGCVYVFEVIKVVPDPKRPEMDRKLRLVGKEPVKGAVTALSEIGGQGFLIVAQGQKCIVRGLKEDGSLLPVAFMDVQCHVSVVKELKGTGMCIIADAVKGLWFAGYSEEPYKMSLFAKDLDYLEVLAADFLPDGNKLFILVADSDCNLHVLQYDPEDPKSSNGDRLLSRSKFHTGNFISTLTLLPRTSVSSEQMISDVDAMDVDIKIPRHQMLITSQNGSVGLVTCVSEESYRRLSALQSQLTNTIEHPCGLNPRAFRAVESDGTAGRGMLDGKLLFQWLDMSKQRKVEIASRVGANEWEIKADFEAISGEGLGYL.

A disordered region spans residues Ser-427–Asp-458.

It belongs to the CFT1 family.

The protein localises to the nucleus. In terms of biological role, RNA-binding component of the cleavage and polyadenylation factor (CPF) complex, which plays a key role in polyadenylation-dependent pre-mRNA 3'-end formation and cooperates with cleavage factors including the CFIA complex and NAB4/CFIB. Involved in poly(A) site recognition. May be involved in coupling transcription termination and mRNA 3'-end formation. The sequence is that of Protein cft1 (cft1) from Aspergillus oryzae (strain ATCC 42149 / RIB 40) (Yellow koji mold).